The sequence spans 83 residues: Mu-theraphotoxin-Hhn2j 3 (83 aa).

Residues 1-21 (MKALMFLALAGLVLLFVVGYA) form the signal peptide. Residues 22 to 48 (SESEEKEFPIELLSKIFAVDVFKGEER) constitute a propeptide that is removed on maturation. 3 disulfides stabilise this stretch: C50/C65, C57/C70, and C64/C77. A Leucine amide modification is found at L81.

It belongs to the neurotoxin 10 (Hwtx-1) family. 15 (Hntx-3) subfamily. In terms of assembly, monomer. Expressed by the venom gland.

Its subcellular location is the secreted. Functionally, lethal neurotoxin. Selectively blocks tetrodotoxin-sensitive voltage-gated sodium channels (Nav). Does not affect tetrodotoxin-resistant voltage-gated sodium channels or calcium channels. This is Mu-theraphotoxin-Hhn2j 3 from Cyriopagopus hainanus (Chinese bird spider).